A 382-amino-acid polypeptide reads, in one-letter code: Queuine tRNA-ribosyltransferase (382 aa).

Asp-93 acts as the Proton acceptor in catalysis. Substrate is bound by residues 93 to 97, Asp-147, Gln-191, and Gly-218; that span reads DSGGF. The segment at 249–255 is RNA binding; sequence GVGKPED. Catalysis depends on Asp-268, which acts as the Nucleophile. The RNA binding; important for wobble base 34 recognition stretch occupies residues 273-277; sequence TRNAR. Zn(2+)-binding residues include Cys-306, Cys-308, Cys-311, and His-337.

Belongs to the queuine tRNA-ribosyltransferase family. Homodimer. Within each dimer, one monomer is responsible for RNA recognition and catalysis, while the other monomer binds to the replacement base PreQ1. Zn(2+) is required as a cofactor.

It catalyses the reaction 7-aminomethyl-7-carbaguanine + guanosine(34) in tRNA = 7-aminomethyl-7-carbaguanosine(34) in tRNA + guanine. It functions in the pathway tRNA modification; tRNA-queuosine biosynthesis. Its function is as follows. Catalyzes the base-exchange of a guanine (G) residue with the queuine precursor 7-aminomethyl-7-deazaguanine (PreQ1) at position 34 (anticodon wobble position) in tRNAs with GU(N) anticodons (tRNA-Asp, -Asn, -His and -Tyr). Catalysis occurs through a double-displacement mechanism. The nucleophile active site attacks the C1' of nucleotide 34 to detach the guanine base from the RNA, forming a covalent enzyme-RNA intermediate. The proton acceptor active site deprotonates the incoming PreQ1, allowing a nucleophilic attack on the C1' of the ribose to form the product. After dissociation, two additional enzymatic reactions on the tRNA convert PreQ1 to queuine (Q), resulting in the hypermodified nucleoside queuosine (7-(((4,5-cis-dihydroxy-2-cyclopenten-1-yl)amino)methyl)-7-deazaguanosine). The protein is Queuine tRNA-ribosyltransferase of Actinobacillus pleuropneumoniae serotype 3 (strain JL03).